Here is a 150-residue protein sequence, read N- to C-terminus: Large ribosomal subunit protein bL9 (150 aa).

This sequence belongs to the bacterial ribosomal protein bL9 family.

Binds to the 23S rRNA. This Arthrobacter sp. (strain FB24) protein is Large ribosomal subunit protein bL9.